A 134-amino-acid chain; its full sequence is Global transcriptional regulator Spx (134 aa).

Cys10 and Cys13 are joined by a disulfide.

Belongs to the ArsC family. Spx subfamily. As to quaternary structure, interacts with the C-terminal domain of the alpha subunit of the RNAP.

It localises to the cytoplasm. Its function is as follows. Global transcriptional regulator that plays a key role in stress response and exerts either positive or negative regulation of genes. Acts by interacting with the C-terminal domain of the alpha subunit of the RNA polymerase (RNAP). This interaction can enhance binding of RNAP to the promoter region of target genes and stimulate their transcription, or block interaction of RNAP with activator. The sequence is that of Global transcriptional regulator Spx from Streptococcus pyogenes serotype M6 (strain ATCC BAA-946 / MGAS10394).